We begin with the raw amino-acid sequence, 61 residues long: MAVPFRRTSKTVKRKRRTHYKLSAPNLVVCPITKNFTLPHRVTKNSGYYKDKLYLANKKID.

It belongs to the bacterial ribosomal protein bL32 family.

The protein is Large ribosomal subunit protein bL32 of Phytoplasma mali (strain AT).